Here is a 327-residue protein sequence, read N- to C-terminus: Glycerol-3-phosphate dehydrogenase [NAD(P)+] (327 aa).

The NADPH site is built by phenylalanine 13, arginine 34, and lysine 107. 2 residues coordinate sn-glycerol 3-phosphate: lysine 107 and glycine 135. Alanine 139 is a binding site for NADPH. Lysine 190, aspartate 243, serine 253, arginine 254, and asparagine 255 together coordinate sn-glycerol 3-phosphate. Lysine 190 (proton acceptor) is an active-site residue. Arginine 254 is a binding site for NADPH. Positions 276 and 277 each coordinate NADPH.

Belongs to the NAD-dependent glycerol-3-phosphate dehydrogenase family.

It is found in the cytoplasm. It catalyses the reaction sn-glycerol 3-phosphate + NAD(+) = dihydroxyacetone phosphate + NADH + H(+). It carries out the reaction sn-glycerol 3-phosphate + NADP(+) = dihydroxyacetone phosphate + NADPH + H(+). It functions in the pathway membrane lipid metabolism; glycerophospholipid metabolism. Functionally, catalyzes the reduction of the glycolytic intermediate dihydroxyacetone phosphate (DHAP) to sn-glycerol 3-phosphate (G3P), the key precursor for phospholipid synthesis. This is Glycerol-3-phosphate dehydrogenase [NAD(P)+] from Rhizobium johnstonii (strain DSM 114642 / LMG 32736 / 3841) (Rhizobium leguminosarum bv. viciae).